The primary structure comprises 92 residues: Small nuclear ribonucleoprotein E (92 aa).

The 75-residue stretch at 18–92 (INLIFRYLQN…NITLLQSVSN (75 aa)) folds into the Sm domain.

This sequence belongs to the snRNP Sm proteins family. As to quaternary structure, core component of the spliceosomal U1, U2, U4 and U5 small nuclear ribonucleoproteins (snRNPs), the building blocks of the spliceosome. Most spliceosomal snRNPs contain a common set of Sm proteins, SNRPB, SNRPD1, SNRPD2, SNRPD3, SNRPE, SNRPF and SNRPG that assemble in a heptameric protein ring on the Sm site of the small nuclear RNA to form the core snRNP. Component of the U1 snRNP. The U1 snRNP is composed of the U1 snRNA and the 7 core Sm proteins SNRPB, SNRPD1, SNRPD2, SNRPD3, SNRPE, SNRPF and SNRPG, and at least three U1 snRNP-specific proteins SNRNP70/U1-70K, SNRPA/U1-A and SNRPC/U1-C. Component of the U4/U6-U5 tri-snRNP complex composed of the U4, U6 and U5 snRNAs and at least PRPF3, PRPF4, PRPF6, PRPF8, PRPF31, SNRNP200, TXNL4A, SNRNP40, SNRPB, SNRPD1, SNRPD2, SNRPD3, SNRPE, SNRPF, SNRPG, DDX23, CD2BP2, PPIH, SNU13, EFTUD2, SART1 and USP39, plus LSM2, LSM3, LSM4, LSM5, LSM6, LSM7 and LSM8. Component of the U7 snRNP complex, or U7 Sm protein core complex, that is composed of the U7 snRNA and at least LSM10, LSM11, SNRPB, SNRPD3, SNRPE, SNRPF and SNRPG; the complex does not contain SNRPD1 and SNRPD2. Component of the minor spliceosome, which splices U12-type introns. Part of the SMN-Sm complex that contains SMN1, GEMIN2/SIP1, DDX20/GEMIN3, GEMIN4, GEMIN5, GEMIN6, GEMIN7, GEMIN8, STRAP/UNRIP and the Sm proteins SNRPB, SNRPD1, SNRPD2, SNRPD3, SNRPE, SNRPF and SNRPG; catalyzes core snRNPs assembly. Forms a 6S pICln-Sm complex composed of CLNS1A/pICln, SNRPD1, SNRPD2, SNRPE, SNRPF and SNRPG; ring-like structure where CLNS1A/pICln mimics additional Sm proteins and which is unable to assemble into the core snRNP. Interacts with SMN1; the interaction is direct. Interacts with GEMIN2 (via N-terminus); the interaction is direct. Interacts with SNRPF; the interaction is direct. Interacts with SNRPG; the interaction is direct.

The protein localises to the cytoplasm. Its subcellular location is the cytosol. It is found in the nucleus. In terms of biological role, plays a role in pre-mRNA splicing as a core component of the spliceosomal U1, U2, U4 and U5 small nuclear ribonucleoproteins (snRNPs), the building blocks of the spliceosome. Component of both the pre-catalytic spliceosome B complex and activated spliceosome C complexes. As a component of the minor spliceosome, involved in the splicing of U12-type introns in pre-mRNAs. As part of the U7 snRNP it is involved in histone 3'-end processing. The sequence is that of Small nuclear ribonucleoprotein E (SNRPE) from Bos taurus (Bovine).